The primary structure comprises 164 residues: Putative histone H2B type 2-D (164 aa).

The span at 1–12 (MPEPAKFAPAPK) shows a compositional bias: low complexity. A disordered region spans residues 1–33 (MPEPAKFAPAPKKGSKKAVTKAQKKDGKKRKRS). Proline 2 is modified (N-acetylproline). Lysine 6 is subject to N6-(2-hydroxyisobutyryl)lysine; alternate. N6-(beta-hydroxybutyryl)lysine; alternate is present on residues lysine 6 and lysine 12. N6-acetyllysine; alternate occurs at positions 6, 12, and 13. Lysine 6 is subject to N6-butyryllysine; alternate. N6-crotonyllysine; alternate is present on residues lysine 6, lysine 12, and lysine 13. Residues lysine 6 and lysine 12 each carry the N6-lactoyllysine; alternate modification. A Glycyl lysine isopeptide (Lys-Gly) (interchain with G-Cter in SUMO2); alternate cross-link involves residue lysine 6. At lysine 13 the chain carries N6-(2-hydroxyisobutyryl)lysine; alternate. Serine 15 is subject to Phosphoserine; by STK4/MST1. 4 positions are modified to N6-acetyllysine; alternate: lysine 16, lysine 17, lysine 21, and lysine 24. N6-crotonyllysine; alternate occurs at positions 16, 17, 21, and 24. Residues lysine 16, lysine 17, lysine 21, and lysine 24 each carry the N6-lactoyllysine; alternate modification. N6-(beta-hydroxybutyryl)lysine; alternate is present on residues lysine 17 and lysine 21. An N6-glutaryllysine; alternate modification is found at lysine 17. N6-(2-hydroxyisobutyryl)lysine; alternate occurs at positions 21 and 24. Position 21 is an N6-butyryllysine; alternate (lysine 21). Lysine 21 participates in a covalent cross-link: Glycyl lysine isopeptide (Lys-Gly) (interchain with G-Cter in SUMO2); alternate. Lysine 25 carries the post-translational modification N6-(2-hydroxyisobutyryl)lysine. Lysine 35 is subject to N6-(2-hydroxyisobutyryl)lysine; alternate. At lysine 35 the chain carries N6-(beta-hydroxybutyryl)lysine; alternate. An N6-crotonyllysine; alternate modification is found at lysine 35. Residue lysine 35 is modified to N6-glutaryllysine; alternate. Residue lysine 35 is modified to N6-succinyllysine; alternate. Lysine 35 is covalently cross-linked (Glycyl lysine isopeptide (Lys-Gly) (interchain with G-Cter in ubiquitin); alternate). Serine 37 is subject to Phosphoserine; by AMPK. 3 positions are modified to N6-(2-hydroxyisobutyryl)lysine; alternate: lysine 44, lysine 47, and lysine 58. Lysine 44 carries the N6-lactoyllysine; alternate modification. N6-glutaryllysine; alternate is present on residues lysine 44 and lysine 47. At lysine 47 the chain carries N6-methyllysine; alternate. Lysine 58 is subject to N6,N6-dimethyllysine; alternate. The residue at position 80 (arginine 80) is a Dimethylated arginine. Lysine 86 is subject to N6-(2-hydroxyisobutyryl)lysine; alternate. N6-(beta-hydroxybutyryl)lysine; alternate is present on lysine 86. Residue lysine 86 is modified to N6-acetyllysine; alternate. Residue lysine 86 is modified to N6-lactoyllysine; alternate. Lysine 86 carries the post-translational modification N6,N6,N6-trimethyllysine; alternate. 2 positions are modified to omega-N-methylarginine: arginine 87 and arginine 93. Residues 111–140 (PCPRAPRRSPSTPAPSESLPGPGARSLPPS) are disordered.

It belongs to the histone H2B family. In terms of assembly, the nucleosome is a histone octamer containing two molecules each of H2A, H2B, H3 and H4 assembled in one H3-H4 heterotetramer and two H2A-H2B heterodimers. The octamer wraps approximately 147 bp of DNA. Post-translationally, phosphorylation at Ser-37 (H2BS36ph) by AMPK in response to stress promotes transcription. Phosphorylated on Ser-15 (H2BS14ph) by STK4/MST1 during apoptosis; which facilitates apoptotic chromatin condensation. Also phosphorylated on Ser-15 in response to DNA double strand breaks (DSBs), and in correlation with somatic hypermutation and immunoglobulin class-switch recombination. Crotonylation (Kcr) is specifically present in male germ cells and marks testis-specific genes in post-meiotic cells, including X-linked genes that escape sex chromosome inactivation in haploid cells. Crotonylation marks active promoters and enhancers and confers resistance to transcriptional repressors. It is also associated with post-meiotically activated genes on autosomes. In terms of processing, lactylated in macrophages by EP300/P300 by using lactoyl-CoA directly derived from endogenous or exogenous lactate, leading to stimulates gene transcription.

The protein localises to the nucleus. It is found in the chromosome. In terms of biological role, core component of nucleosome. Nucleosomes wrap and compact DNA into chromatin, limiting DNA accessibility to the cellular machineries which require DNA as a template. Histones thereby play a central role in transcription regulation, DNA repair, DNA replication and chromosomal stability. DNA accessibility is regulated via a complex set of post-translational modifications of histones, also called histone code, and nucleosome remodeling. This Homo sapiens (Human) protein is Putative histone H2B type 2-D.